A 148-amino-acid polypeptide reads, in one-letter code: Cytochrome c-type biogenesis protein CcmE (148 aa).

Topologically, residues 1–7 (MTRKQRR) are cytoplasmic. The chain crosses the membrane as a helical; Signal-anchor for type II membrane protein span at residues 8-28 (LYFVLLGMAALGGAVALVLTA). Residues 29-148 (ISDSLVYFYS…QWNDGKQPKQ (120 aa)) are Periplasmic-facing. Residues His-121 and Tyr-125 each contribute to the heme site.

Belongs to the CcmE/CycJ family.

The protein resides in the cell inner membrane. Heme chaperone required for the biogenesis of c-type cytochromes. Transiently binds heme delivered by CcmC and transfers the heme to apo-cytochromes in a process facilitated by CcmF and CcmH. This Paramagnetospirillum magneticum (strain ATCC 700264 / AMB-1) (Magnetospirillum magneticum) protein is Cytochrome c-type biogenesis protein CcmE.